The primary structure comprises 116 residues: Large ribosomal subunit protein bL17 (116 aa).

Belongs to the bacterial ribosomal protein bL17 family. In terms of assembly, part of the 50S ribosomal subunit. Contacts protein L32.

In Picosynechococcus sp. (strain ATCC 27264 / PCC 7002 / PR-6) (Agmenellum quadruplicatum), this protein is Large ribosomal subunit protein bL17.